The primary structure comprises 350 residues: Cytosolic sulfotransferase 18 (350 aa).

Met-1 is subject to N-acetylmethionine. Residues 1-17 (MESETLTAKATITTTTL) are compositionally biased toward low complexity. The disordered stretch occupies residues 1–28 (MESETLTAKATITTTTLPSHDETKTEST). Over residues 19 to 28 (SHDETKTEST) the composition is skewed to basic and acidic residues. Residue 93–98 (KTGTTW) coordinates 3'-phosphoadenylyl sulfate. Residue His-155 is the Proton acceptor of the active site. 3'-phosphoadenylyl sulfate is bound by residues Arg-177, Ser-185, Tyr-243, and 313–315 (RKG).

The protein belongs to the sulfotransferase 1 family. In terms of tissue distribution, expressed in roots, leaves and stems. Barely detected in siliques and flowers.

Its subcellular location is the cytoplasm. The enzyme catalyses an aliphatic (Z)-desulfo-glucosinolate + 3'-phosphoadenylyl sulfate = a (Z)-omega-(methylsulfanyl)-N-sulfo-alkylhydroximate S-glucoside + adenosine 3',5'-bisphosphate + H(+). With respect to regulation, inhibited by phosphoadenosine 5'-phosphate (PAP). Its function is as follows. Sulfotransferase that utilizes 3'-phospho-5'-adenylyl sulfate (PAPS) as sulfonate donor to catalyze the sulfate conjugation of desulfo-glucosinolates (dsGSs), the final step in the biosynthesis of the glucosinolate core structure. Preferred substrate are the long-chain desulfo-glucosinolates, 7-methylthioheptyl and 8-methylthiooctyl, derived from methionine. Substrate preference is desulfo-benzyl glucosinolate &gt; desulfo-4-methylthiobutyl glucosinolate &gt; desulfo-6-methylthiohexyl glucosinolate &gt; desulfo-3-methylthiopropyl glucosinolate &gt; desulfo-indol-3-yl methyl glucosinolate &gt; desulfo-singrin &gt; desulfo-3-butenyl glucosinolate. In Arabidopsis thaliana (Mouse-ear cress), this protein is Cytosolic sulfotransferase 18 (SOT18).